The sequence spans 326 residues: DNA-directed RNA polymerase subunit alpha (326 aa).

An alpha N-terminal domain (alpha-NTD) region spans residues 1 to 230; the sequence is MLKIEKQAKA…LHLDPFLEIG (230 aa). The alpha C-terminal domain (alpha-CTD) stretch occupies residues 249 to 326; sequence DIQVIDDKSH…YDLEKNGSPE (78 aa).

Belongs to the RNA polymerase alpha chain family. Homodimer. The RNAP catalytic core consists of 2 alpha, 1 beta, 1 beta' and 1 omega subunit. When a sigma factor is associated with the core the holoenzyme is formed, which can initiate transcription.

The catalysed reaction is RNA(n) + a ribonucleoside 5'-triphosphate = RNA(n+1) + diphosphate. Functionally, DNA-dependent RNA polymerase catalyzes the transcription of DNA into RNA using the four ribonucleoside triphosphates as substrates. This Fusobacterium nucleatum subsp. nucleatum (strain ATCC 25586 / DSM 15643 / BCRC 10681 / CIP 101130 / JCM 8532 / KCTC 2640 / LMG 13131 / VPI 4355) protein is DNA-directed RNA polymerase subunit alpha.